Reading from the N-terminus, the 317-residue chain is Apolipoprotein E (317 aa).

The first 18 residues, 1–18 (MKVLWAALLVTFLAGCQA), serve as a signal peptide directing secretion. 8 repeat units span residues 80 to 101 (ALMD…EQLT), 102 to 123 (PVAE…ARLG), 124 to 145 (ADME…AMLG), 146 to 167 (QSTE…KRLL), 168 to 189 (RDAD…EGAE), 190 to 211 (RGVS…VRAA), 212 to 233 (TVGS…ERLR), and 234 to 255 (ARME…EQVA). Positions 80 to 255 (ALMDETMKEL…RLDEVKEQVA (176 aa)) are 8 X 22 AA approximate tandem repeats. Position 143 is a methionine sulfoxide (methionine 143). Serine 147 carries the post-translational modification Phosphoserine. The LDL and other lipoprotein receptors binding stretch occupies residues 158–168 (HLRKLRKRLLR). 162 to 165 (LRKR) is a heparin binding site. The tract at residues 210-290 (AATVGSLAGQ…SWFEPLVEDM (81 aa)) is lipid-binding and lipoprotein association. Heparin is bound at residue 229–236 (GERLRARM). The tract at residues 266 to 317 (QQIRLQAEAFQARLKSWFEPLVEDMQRQWAGLVEKVQAAVGTSAAPVPSDNH) is homooligomerization. A specificity for association with VLDL region spans residues 278–290 (RLKSWFEPLVEDM).

It belongs to the apolipoprotein A1/A4/E family. Homotetramer. May interact with ABCA1; functionally associated with ABCA1 in the biogenesis of HDLs. May interact with APP/A4 amyloid-beta peptide; the interaction is extremely stable in vitro but its physiological significance is unclear. May interact with MAPT. May interact with MAP2. In the cerebrospinal fluid, interacts with secreted SORL1. Interacts with PMEL; this allows the loading of PMEL luminal fragment on ILVs to induce fibril nucleation. In terms of processing, APOE exists as multiple glycosylated and sialylated glycoforms within cells and in plasma. The extent of glycosylation and sialylation are tissue and context specific. Post-translationally, glycated in plasma VLDL. Phosphorylated by FAM20C in the extracellular medium.

It is found in the secreted. Its subcellular location is the extracellular space. It localises to the extracellular matrix. The protein resides in the extracellular vesicle. The protein localises to the endosome. It is found in the multivesicular body. Functionally, APOE is an apolipoprotein, a protein associating with lipid particles, that mainly functions in lipoprotein-mediated lipid transport between organs via the plasma and interstitial fluids. APOE is a core component of plasma lipoproteins and is involved in their production, conversion and clearance. Apolipoproteins are amphipathic molecules that interact both with lipids of the lipoprotein particle core and the aqueous environment of the plasma. As such, APOE associates with chylomicrons, chylomicron remnants, very low density lipoproteins (VLDL) and intermediate density lipoproteins (IDL) but shows a preferential binding to high-density lipoproteins (HDL). It also binds a wide range of cellular receptors including the LDL receptor/LDLR, the LDL receptor-related proteins LRP1, LRP2 and LRP8 and the very low-density lipoprotein receptor/VLDLR that mediate the cellular uptake of the APOE-containing lipoprotein particles. Finally, APOE also has a heparin-binding activity and binds heparan-sulfate proteoglycans on the surface of cells, a property that supports the capture and the receptor-mediated uptake of APOE-containing lipoproteins by cells. A main function of APOE is to mediate lipoprotein clearance through the uptake of chylomicrons, VLDLs, and HDLs by hepatocytes. APOE is also involved in the biosynthesis by the liver of VLDLs as well as their uptake by peripheral tissues ensuring the delivery of triglycerides and energy storage in muscle, heart and adipose tissues. By participating in the lipoprotein-mediated distribution of lipids among tissues, APOE plays a critical role in plasma and tissues lipid homeostasis. APOE is also involved in two steps of reverse cholesterol transport, the HDLs-mediated transport of cholesterol from peripheral tissues to the liver, and thereby plays an important role in cholesterol homeostasis. First, it is functionally associated with ABCA1 in the biogenesis of HDLs in tissues. Second, it is enriched in circulating HDLs and mediates their uptake by hepatocytes. APOE also plays an important role in lipid transport in the central nervous system, regulating neuron survival and sprouting. The polypeptide is Apolipoprotein E (APOE) (Hylobates lar (Lar gibbon)).